The chain runs to 168 residues: Protein-export protein SecB (168 aa).

Positions 1-20 are disordered; that stretch reads MTDETAANGENEAGRQSQSS.

Belongs to the SecB family. In terms of assembly, homotetramer, a dimer of dimers. One homotetramer interacts with 1 SecA dimer.

Its subcellular location is the cytoplasm. Functionally, one of the proteins required for the normal export of preproteins out of the cell cytoplasm. It is a molecular chaperone that binds to a subset of precursor proteins, maintaining them in a translocation-competent state. It also specifically binds to its receptor SecA. The protein is Protein-export protein SecB of Rhodospirillum centenum (strain ATCC 51521 / SW).